The sequence spans 111 residues: Ribonuclease P protein component 1 (111 aa).

Belongs to the eukaryotic/archaeal RNase P protein component 1 family. Consists of a catalytic RNA component and at least 4-5 protein subunits.

Its subcellular location is the cytoplasm. The enzyme catalyses Endonucleolytic cleavage of RNA, removing 5'-extranucleotides from tRNA precursor.. In terms of biological role, part of ribonuclease P, a protein complex that generates mature tRNA molecules by cleaving their 5'-ends. The polypeptide is Ribonuclease P protein component 1 (Hyperthermus butylicus (strain DSM 5456 / JCM 9403 / PLM1-5)).